Consider the following 200-residue polypeptide: 3-isopropylmalate dehydratase small subunit (200 aa).

Belongs to the LeuD family. LeuD type 1 subfamily. In terms of assembly, heterodimer of LeuC and LeuD.

The catalysed reaction is (2R,3S)-3-isopropylmalate = (2S)-2-isopropylmalate. It participates in amino-acid biosynthesis; L-leucine biosynthesis; L-leucine from 3-methyl-2-oxobutanoate: step 2/4. Its function is as follows. Catalyzes the isomerization between 2-isopropylmalate and 3-isopropylmalate, via the formation of 2-isopropylmaleate. The polypeptide is 3-isopropylmalate dehydratase small subunit (Aliivibrio fischeri (strain MJ11) (Vibrio fischeri)).